The chain runs to 448 residues: Exodeoxyribonuclease 7 large subunit (448 aa).

It belongs to the XseA family. In terms of assembly, heterooligomer composed of large and small subunits.

It is found in the cytoplasm. The enzyme catalyses Exonucleolytic cleavage in either 5'- to 3'- or 3'- to 5'-direction to yield nucleoside 5'-phosphates.. Bidirectionally degrades single-stranded DNA into large acid-insoluble oligonucleotides, which are then degraded further into small acid-soluble oligonucleotides. The chain is Exodeoxyribonuclease 7 large subunit from Bacillus pumilus (strain SAFR-032).